Here is a 411-residue protein sequence, read N- to C-terminus: Argininosuccinate synthase (411 aa).

ATP is bound by residues 15–23 (AYSGGLDTS) and Ala42. Residues Tyr93 and Ser98 each contribute to the L-citrulline site. Gly123 is an ATP binding site. Residues Thr125, Asn129, and Asp130 each contribute to the L-aspartate site. Position 129 (Asn129) interacts with L-citrulline. Positions 133, 185, 194, 270, and 282 each coordinate L-citrulline.

This sequence belongs to the argininosuccinate synthase family. Type 1 subfamily. As to quaternary structure, homotetramer.

The protein resides in the cytoplasm. It catalyses the reaction L-citrulline + L-aspartate + ATP = 2-(N(omega)-L-arginino)succinate + AMP + diphosphate + H(+). It participates in amino-acid biosynthesis; L-arginine biosynthesis; L-arginine from L-ornithine and carbamoyl phosphate: step 2/3. The chain is Argininosuccinate synthase from Psychrobacter sp. (strain PRwf-1).